Reading from the N-terminus, the 298-residue chain is uncharacterized protein (298 aa).

An N-terminal signal peptide occupies residues 1–19; it reads MFRKFLFIQLLIVTSLVKA. The segment at 278 to 298 is disordered; sequence RNNPPLKNNNAKSKNSYETYK. Over residues 279 to 298 the composition is skewed to low complexity; sequence NNPPLKNNNAKSKNSYETYK.

This sequence to R.prowazekii RP296.

This is an uncharacterized protein from Rickettsia prowazekii (strain Madrid E).